The chain runs to 5478 residues: Mucin-12 (5478 aa).

The N-terminal stretch at 1–16 (MLVIWILTLALRLCAS) is a signal peptide. Residues 17 to 5380 (VTTVTPEGSA…EFNIAKSLVY (5364 aa)) lie on the Extracellular side of the membrane. 3 N-linked (GlcNAc...) asparagine glycosylation sites follow: Asn154, Asn170, and Asn176. Positions 212-737 (LDSSTNSGHS…GSTETTLLPD (526 aa)) are disordered. Repeat 1 spans residues 222 to 240 (EESTVSHSGPGATGTTLFP). The interval 222-4761 (EESTVSHSGP…PGSTQTMHFP (4540 aa)) is 28 X 19 AA approximate tandem repeats of E-E-S-X-X-X-H-X-X-P-X-X-T-X-T-X-X-X-P. 4 stretches are compositionally biased toward polar residues: residues 226 to 246 (VSHSGPGATGTTLFPSHSATS), 255 to 288 (SPITSASMETTALPGSTTTAGLSEKSTTFYSSPR), 296 to 313 (PARTTSSGVSEKSTTSHS), and 325 to 342 (DSTTMPGVSQESTASHSI). Low complexity predominate over residues 343–366 (PGSTDTTLSPGTTTPSSLGPESTT). Positions 367–387 (FHSSPGYTKTTRLPDNTTTSG) are enriched in polar residues. A glycan (N-linked (GlcNAc...) asparagine) is linked at Asn382. Residues 396-413 (HSSTGSPHTTLSPSSSTT) are compositionally biased toward low complexity. Residues 419-440 (TTFQSWPSSKDTSPAPSGTTSA) are compositionally biased toward polar residues. Low complexity-rich tracts occupy residues 445 to 466 (STTYHSSPSSTPTTHFSASSTT) and 478 to 495 (SSPVATATTPPPARSATS). 2 tandem repeats follow at residues 471-489 (EESTPVHSSPVATATTPPP) and 499-517 (EESTAYHRSPGSTQTMHFP). The segment covering 531 to 554 (TFHGSTTHTKSSTPSTTAALAHTS) has biased composition (low complexity). Composition is skewed to polar residues over residues 555–575 (YHSSLGSTETTHFRDSSTISG) and 608–648 (STPS…SPDT). Residues 654–669 (SMTSSGVSEESTTSHS) are compositionally biased toward low complexity. Repeat 4 spans residues 662-680 (EESTTSHSRPGSTHTTAFP). Polar residues-rich tracts occupy residues 670-715 (RPGS…TASS) and 722-737 (TFHSRPGSTETTLLPD). Residue Asn738 is glycosylated (N-linked (GlcNAc...) asparagine). Disordered stretches follow at residues 749–4847 (MPVH…HFTT), 4887–5034 (SSRS…THTV), 5048–5071 (STAFHSSSDATGTTPLPARSTASD), and 5093–5112 (ASSSTSGLTEESTTFHTSPS). Polar residues-rich tracts occupy residues 751–783 (VHSSTRSPHTTLSPAGSTTRQGESTTFHSWPSS) and 792–842 (TTTS…TQTM). Repeat unit 5 spans residues 827-845 (EESTTYHSSPGSTQTMHFP). Over residues 859–877 (TSHSSTTHTISSAPSTTSA) the composition is skewed to low complexity. 2 stretches are compositionally biased toward polar residues: residues 884–899 (SYHSSPGSTATTHFPD) and 928–970 (RSTT…TTFH). Over residues 971 to 1007 (SSPRSPATTLSPASTTSSGVSEESTTSRSRPGSTHTT) the composition is skewed to low complexity. The span at 1009 to 1021 (FPDSTTTPGLSRH) shows a compositional bias: polar residues. Residues 1022–1065 (STTSHSSPGSTDTTLLPASTTTSGPSQESTTSHSSSGSTDTALS) are compositionally biased toward low complexity. Polar residues-rich tracts occupy residues 1066-1101 (PGSTTALSFGQESTTFHSNPGSTHTTLFPDSTTSSG) and 1108-1138 (RVHSSTGSPRTTLSPASSTSPGLQGESTAFQ). The segment covering 1139 to 1157 (THPASTHTTPSPPSTATAP) has biased composition (low complexity). Copy 6 of the repeat occupies 1159–1177 (EESTTYHRSPGSTPTTHFP). Composition is skewed to polar residues over residues 1160–1184 (ESTTYHRSPGSTPTTHFPASSTTSG) and 1191–1207 (IFHSSPDASGTTPSSAH). Low complexity-rich tracts occupy residues 1208-1220 (STTSGRGESTTSR), 1229-1241 (TTLPGSTTTPGLS), and 1249-1262 (SSPRSPTTTLSPAS). 3 stretches are compositionally biased toward polar residues: residues 1271-1324 (ESTT…TTSV), 1331-1357 (TFHSRPASTHTTLFTEDSTTSGLTEES), and 1364-1377 (PASTQTGLPATLTT). 2 stretches are compositionally biased toward low complexity: residues 1384–1396 (STTFPSSSGSTGT) and 1411–1438 (ESTPSRLSPSSTETTTLPGSPTTPSLSE). Positions 1439 to 1448 (KSTTFYTSPR) are enriched in polar residues. Residues 1458 to 1481 (TTTSSGVSEESSTSHSQPGSTHTT) are compositionally biased toward low complexity. Repeat 7 spans residues 1466-1484 (EESSTSHSQPGSTHTTAFP). Over residues 1483–1537 (FPDSTTTSDLSQEPTTSHSSQGSTEATLSPGSTTASSLGQQSTTFHSSPGDTETT) the composition is skewed to polar residues. Residues 1552-1568 (STPTHSSTGSLHTTLTP) are compositionally biased toward low complexity. Polar residues-rich tracts occupy residues 1569–1586 (ASSTSAGLQEESTTFQSW) and 1606–1630 (VSTTYHSRPSSTPTTHFSASSTTLG). Copy 8 of the repeat occupies 1633 to 1651 (EESTTVHSSPGATGTALFP). Polar residues predominate over residues 1653-1708 (RSATSVLVGEPTTSPISSGSTETTALPGSTTTAGLSEKSTTFYSSPRSPDTTLSPA). The span at 1709–1724 (STTSSGVSEESTTSHS) shows a compositional bias: low complexity. Repeat unit 9 spans residues 1717–1735 (EESTTSHSRPGSTHTTAFP). Composition is skewed to polar residues over residues 1725 to 1797 (RPGS…TTAS) and 1805 to 1840 (PVHSSTGSPHTTLSPAGSTTRQGESTTFQSWPSSKD). Asn1793 carries an N-linked (GlcNAc...) asparagine glycan. Composition is skewed to low complexity over residues 1856-1877 (STTSHGSPSSTPTTHFSASSTT) and 1889-1906 (SSPVATATTPSPARSTTS). 2 repeat units span residues 1882–1900 (EESTTVHSSPVATATTPSP) and 1910–1928 (EESTAYHSSPGSTQTMHFP). Polar residues predominate over residues 1914–1935 (AYHSSPGSTQTMHFPESSTASG). A compositionally biased stretch (low complexity) spans 1943–1959 (SHSSTTHTISSPPSTTS). Polar residues-rich tracts occupy residues 1967 to 1982 (SYHSSPGSTATTHFPD) and 2011 to 2053 (RSTT…TTFH). The segment covering 2054 to 2082 (SSPRSPATTLSPASTTSSGVSEESTTSHS) has biased composition (low complexity). The stretch at 2075–2093 (EESTTSHSRPGSTHTTAFP) is repeat 12. Polar residues predominate over residues 2083-2104 (RPGSTHTTAFPDSTTTPGLSRH). The segment covering 2105–2130 (STTSHSSPGSTDTTLLPASTTTSGPS) has biased composition (low complexity). Composition is skewed to polar residues over residues 2131–2184 (QEST…TSSG) and 2191–2221 (RVHSSTGSPRTTLSPASSTSPGLQGESTAFQ). A compositionally biased stretch (low complexity) spans 2222–2240 (THPASTHTTPSPPSTATAP). Repeat 13 spans residues 2242–2260 (EESTTYHRSPGSTPTTHFP). Composition is skewed to polar residues over residues 2243–2267 (ESTTYHRSPGSTPTTHFPASSTTSG) and 2274–2290 (IFHSSPDASGTTPSSAH). Low complexity-rich tracts occupy residues 2291 to 2303 (STTSGRGESTTSR), 2312 to 2324 (TTLPGSTTTPGLS), and 2332 to 2345 (SSPRSPTTTLSPAS). Residues 2354-2392 (ESTTSRSQPGSTHSTVSPASTTTPGLSEESTTVYSSSPG) are compositionally biased toward polar residues. Residues 2393–2407 (STETTVFPRTPTTSV) show a composition bias toward low complexity. Composition is skewed to polar residues over residues 2414-2440 (TFHSRPASTHTTLFTEDSTTSGLTEES) and 2447-2460 (PASTQTGLPATLTT). Low complexity-rich tracts occupy residues 2467–2483 (STTFPSSSGSTGTTLSP) and 2494–2521 (ESTPSRLSPSSTETTTLPGSPTTPSLSE). Over residues 2522-2531 (KSTTFYTSPR) the composition is skewed to polar residues. Residues 2541–2564 (TTTSSGVSEESSTSHSQPGSTHTT) are compositionally biased toward low complexity. Repeat 14 spans residues 2549-2567 (EESSTSHSQPGSTHTTAFP). Residues 2566–2578 (FPDSTTTPGLSRH) are compositionally biased toward polar residues. The segment covering 2579-2604 (STTSHSSPGSTDTTLLPASTTTSGPS) has biased composition (low complexity). Polar residues-rich tracts occupy residues 2605–2658 (QEST…TSSG) and 2665–2695 (RVHSSTGSPRTTLSPASSTSPGLQGESTTFQ). Low complexity predominate over residues 2696–2714 (THPASTHTTPSPPSTATAP). The stretch at 2716–2734 (EESTTYHRSPGSTPTTHFP) is repeat 15. 2 stretches are compositionally biased toward polar residues: residues 2717 to 2741 (ESTTYHRSPGSTPTTHFPASSTTSG) and 2748 to 2764 (IFHSSPDASGTTPSSAH). Composition is skewed to low complexity over residues 2765-2777 (STTSGRGESTTSR), 2786-2798 (TTLPGSTTTPGLS), and 2806-2819 (SSPRSPTTTLSPAS). Composition is skewed to polar residues over residues 2828–2881 (ESTT…TTSV), 2888–2914 (TFHSRPASTHTTLFTEDSTTSGLTEES), and 2921–2934 (PASTQTGLPATLTT). Composition is skewed to low complexity over residues 2941–2957 (STTFPSSSGSTGTTLSP) and 2968–2995 (ESTPSRLSPSSTETTTLPGSPTTPSLSE). Over residues 2996–3005 (KSTTFYTSPR) the composition is skewed to polar residues. Residues 3015–3038 (TTTSSGVSEESSTSHSQPGSTHTT) show a composition bias toward low complexity. Repeat 16 spans residues 3023–3041 (EESSTSHSQPGSTHTTAFP). The span at 3040 to 3094 (FPDSTTTSGLSQEPTASHSSQGSTEATLSPGSTTASSLGQQSTTFHSSPGDTETT) shows a compositional bias: polar residues. Low complexity predominate over residues 3109–3125 (STPTHSSTGSLHTTLTP). Polar residues-rich tracts occupy residues 3126 to 3143 (ASSTSAGLQEESTTFQSW) and 3163 to 3187 (VSTTYHSRPSSTPTTHFSASSTTLG). The stretch at 3190–3208 (EESTTVHSSPGATGTALFP) is repeat 17. Residues 3210-3265 (RSATSVLVGEPTTSPISSGSTETTALPGSTTTAGLSEKSTTFYSSPRSPDTTLSPA) are compositionally biased toward polar residues. Residues 3266-3281 (STTSSGVSEESTTSHS) show a composition bias toward low complexity. Repeat unit 18 spans residues 3274–3292 (EESTTSHSRPGSTHTTAFP). Composition is skewed to polar residues over residues 3282–3354 (RPGS…TTAS) and 3362–3397 (PVHSSTGSPHTTLSPAGSTTRQGESTTFQSWPNSKD). N-linked (GlcNAc...) asparagine glycosylation occurs at Asn3350. Low complexity-rich tracts occupy residues 3413 to 3434 (STTSHGSPSSTPTTHFSASSTT) and 3446 to 3463 (SSPVATATTPSPARSTTS). A run of 2 repeats spans residues 3439-3457 (EESTTVHSSPVATATTPSP) and 3467-3485 (EESTTYHSSPGSTQTMHFP). Polar residues predominate over residues 3468–3482 (ESTTYHSSPGSTQTM). Positions 3499 to 3517 (TSHSSTTHTISSAPSTTSA) are enriched in low complexity. 2 stretches are compositionally biased toward polar residues: residues 3524-3539 (SYHSSPGSTATTHFPD) and 3568-3610 (RSTT…TTFH). Residues 3611–3639 (SSPRSPATTLSPASTTSSGVSEESTTSHS) are compositionally biased toward low complexity. Repeat 21 spans residues 3632-3650 (EESTTSHSRPGSTHTTAFP). A compositionally biased stretch (polar residues) spans 3640 to 3661 (RPGSTHTTAFPDSTTTPGLSRH). The span at 3662 to 3705 (STTSHSSPGSTDTTLLPASTTTSGSSQESTTSHSSSGSTDTALS) shows a compositional bias: low complexity. 2 stretches are compositionally biased toward polar residues: residues 3706 to 3741 (PGSTTALSFGQESTTFHSSPGSTHTTLFPDSTTSSG) and 3748 to 3778 (RVHSSTGSPRTTLSPASSTSPGLQGESTAFQ). Residues 3779–3797 (THPASTHTTPSPPSTATAP) are compositionally biased toward low complexity. Repeat 22 spans residues 3799-3817 (EESTTYHRSPGSTPTTHFP). Polar residues-rich tracts occupy residues 3800-3824 (ESTTYHRSPGSTPTTHFPASSTTSG) and 3831-3847 (IFHSSPDASGTTPSSAH). Low complexity-rich tracts occupy residues 3848 to 3860 (STTSGRGESTTSR), 3869 to 3881 (TTLPGSTTTPGLS), and 3889 to 3902 (SSPRSPTTTLSPAS). Composition is skewed to polar residues over residues 3911 to 3963 (ESTT…TTTS), 3971 to 3997 (TFHSRPASTHTTLFTEDSTTSGLTEES), and 4004 to 4017 (PASTQTGLPATLTT). 2 stretches are compositionally biased toward low complexity: residues 4024–4036 (STTFPSSSGSTGT) and 4051–4078 (ESTPSRLSPSSTETTTLPGSPTTPSLSE). Over residues 4079–4088 (KSTTFYTSPR) the composition is skewed to polar residues. Over residues 4098–4121 (TTTSSGVSEESSTSHSQPGSTHTT) the composition is skewed to low complexity. Residues 4106–4124 (EESSTSHSQPGSTHTTAFP) form repeat 23. Over residues 4123-4177 (FPDSTTTSGLSQEPTTSHSSQGSTEATLSPGSTTASSLGQQSTTFHSSPGDTETT) the composition is skewed to polar residues. Positions 4192 to 4208 (STPTHSSTGSLHTTLTP) are enriched in low complexity. Positions 4209 to 4226 (ASSTSTGLQEESTTFQSW) are enriched in polar residues. A compositionally biased stretch (low complexity) spans 4227–4249 (PSSSDTTPSPPSTTAVPVEVSTT). Residues 4250 to 4270 (YHSRPSSTPTTHFSASSTTLG) are compositionally biased toward polar residues. The stretch at 4273-4291 (EESTTVHSSPGATGTALFP) is repeat 24. Residues 4293-4348 (RSATSVLVGEPTTSPISSGSTETTALPGSTTTAGLSEKSTTFYSSPRSPDTTLSPA) are compositionally biased toward polar residues. Positions 4349 to 4364 (STTSSGVSEESTTSHS) are enriched in low complexity. Composition is skewed to polar residues over residues 4369–4437 (MHTT…TTAS) and 4445–4480 (PVHSSTGSPHTTLSPAGSTTRQGESTTFQSWPNSKD). Residue Asn4433 is glycosylated (N-linked (GlcNAc...) asparagine). 2 stretches are compositionally biased toward low complexity: residues 4496-4517 (STTSHGSPSSTPTTHFSASSTT) and 4529-4546 (SSPVATATTPSPARSTTS). 2 tandem repeats follow at residues 4522–4540 (EESTTVHSSPVATATTPSP) and 4550–4568 (EESTTYHSSPGSTQTMHFP). Residues 4551 to 4571 (ESTTYHSSPGSTQTMHFPESN) are compositionally biased toward polar residues. N-linked (GlcNAc...) asparagine glycosylation is present at Asn4571. Low complexity predominate over residues 4582-4600 (TSHSSTTHTISSAPSTTSA). Polar residues-rich tracts occupy residues 4607–4622 (SYHSSPGSTATTHFPD) and 4651–4688 (RSTTSVLLGESTTSPISSGSMETTALPGSTTTPGLSEK). Composition is skewed to low complexity over residues 4689–4710 (STTFHSSPSSTPTTHFSASSTT) and 4722–4739 (SSPVATATTPSPARSTTS). Tandem repeats lie at residues 4715–4733 (EESTTVHSSPVATATTPSP) and 4743–4761 (EESTAYHSSPGSTQTMHFP). Residues 4747–4768 (AYHSSPGSTQTMHFPESSTASG) are compositionally biased toward polar residues. A compositionally biased stretch (low complexity) spans 4776–4792 (SHSSTTHTISSPPSTTS). Polar residues-rich tracts occupy residues 4800-4814 (SYHSSPGSIATTHFP) and 4887-4917 (SSRSPDQTLSPASMTSSSISGEPTSLYSQAE). Over residues 4918–4931 (STHTTAFPASTTTS) the composition is skewed to low complexity. 2 stretches are compositionally biased toward polar residues: residues 4932 to 5024 (GLSQ…STPF) and 5048 to 5061 (STAFHSSSDATGTT). A compositionally biased stretch (low complexity) spans 5094–5112 (SSSTSGLTEESTTFHTSPS). Residues 5116–5154 (TIVSTESLETLAPGLCQEGQIWNGKQCVCPQGYVGYQCL) enclose the EGF-like domain. The cysteines at positions 5144 and 5153 are disulfide-linked. The region spanning 5168-5275 (LNATLGMTVK…TRTTLLDPDS (108 aa)) is the SEA domain. Asn5169, Asn5182, Asn5197, Asn5228, and Asn5264 each carry an N-linked (GlcNAc...) asparagine glycan. Positions 5226–5233 (LLNGSIVV) match the Cleavage motif motif. A helical transmembrane segment spans residues 5381–5401 (GIVGAVMAVLLLALIILIILF). Topologically, residues 5402–5478 (SLSQRKRHRE…QRPEMVASTV (77 aa)) are cytoplasmic.

In terms of tissue distribution, ubiquitous, with higher expression in colon. Down-regulated in colorectal cancer as well as in the colon of patients with ulcerative colitis (UC) and Crohn's disease (CD).

Its subcellular location is the membrane. Its function is as follows. Involved in epithelial cell protection, adhesion modulation, and signaling. May be involved in epithelial cell growth regulation. Stimulated by both cytokine TNF-alpha and TGF-beta in intestinal epithelium. The protein is Mucin-12 (MUC12) of Homo sapiens (Human).